The primary structure comprises 260 residues: Tropinone reductase 2 (260 aa).

Position 18-41 (18-41) interacts with NADP(+); the sequence is SRGIGYGIVEELASLGASVYTCSR. Ser146 is a substrate binding site. Tyr159 acts as the Proton acceptor in catalysis. 192–196 is a binding site for NADP(+); it reads IATSL.

It belongs to the short-chain dehydrogenases/reductases (SDR) family. As to quaternary structure, homodimer.

The catalysed reaction is pseudotropine + NADP(+) = tropinone + NADPH + H(+). Its pathway is alkaloid biosynthesis; tropane alkaloid biosynthesis. Its function is as follows. Catalyzes the stereospecific reduction of tropinone to pseudotropine. The sequence is that of Tropinone reductase 2 (TR2) from Datura stramonium (Jimsonweed).